We begin with the raw amino-acid sequence, 198 residues long: Mediator of RNA polymerase II transcription subunit 22 (198 aa).

Residues 159–198 (WGSPEMTSDPSHANHEVSDHLGSQESMQRHRNGSGTSEQS) are disordered.

Belongs to the Mediator complex subunit 22 family. In terms of assembly, component of the Mediator complex.

Its subcellular location is the nucleus. In terms of biological role, component of the Mediator complex, a coactivator involved in the regulated transcription of nearly all RNA polymerase II-dependent genes. Mediator functions as a bridge to convey information from gene-specific regulatory proteins to the basal RNA polymerase II transcription machinery. Mediator is recruited to promoters by direct interactions with regulatory proteins and serves as a scaffold for the assembly of a functional preinitiation complex with RNA polymerase II and the general transcription factors. The polypeptide is Mediator of RNA polymerase II transcription subunit 22 (med22) (Danio rerio (Zebrafish)).